Here is a 399-residue protein sequence, read N- to C-terminus: Nitric oxide reductase (399 aa).

Residues 32–221 form a zinc metallo-hydrolase region; sequence HRGTTYNAYL…DEIQKINLAI (190 aa). His81, Glu83, Asp85, His148, Asp167, and His228 together coordinate Fe cation. A Flavodoxin-like domain is found at 255-394; sequence AVIAYDTMWL…RCYELGRKIA (140 aa).

The protein in the N-terminal section; belongs to the zinc metallo-hydrolase group 3 family. Homodimer. Requires FMN as cofactor. It depends on Fe cation as a cofactor.

Has nitric oxide reductase activity in combination with Hrb; probably involved in nitrosative stress protection. This is Nitric oxide reductase (fprA) from Moorella thermoacetica (strain ATCC 39073 / JCM 9320).